Here is a 30-residue protein sequence, read N- to C-terminus: GIPCGESCVFIPCITAAIGCSCKSKVCYRN.

Positions 1-30 (GIPCGESCVFIPCITAAIGCSCKSKVCYRN) form a cross-link, cyclopeptide (Gly-Asn). Intrachain disulfides connect C4–C20, C8–C22, and C13–C27.

This is a cyclic peptide.

The protein localises to the secreted. Functionally, probably participates in a plant defense mechanism. The protein is Cyclotide cter-P of Clitoria ternatea (Butterfly pea).